Reading from the N-terminus, the 470-residue chain is Acetyl-CoA decarbonylase/synthase complex subunit beta 2 (470 aa).

Positions 189, 192, 278, and 280 each coordinate [Ni-Fe-S] cluster.

This sequence belongs to the CdhC family. As to quaternary structure, monomer. The ACDS complex is made up of alpha, epsilon, beta, gamma and delta chains with a probable stoichiometry of (alpha(2)epsilon(2))(4)-beta(8)-(gamma(1)delta(1))(8) (Potential). The cofactor is [Ni-Fe-S] cluster.

The enzyme catalyses Co(I)-[corrinoid Fe-S protein] + acetyl-CoA + H(+) = methyl-Co(III)-[corrinoid Fe-S protein] + CO + CoA. It functions in the pathway one-carbon metabolism; methanogenesis from acetate. Part of a complex that catalyzes the reversible cleavage of acetyl-CoA, allowing growth on acetate as sole source of carbon and energy. The alpha-epsilon complex generates CO from CO(2), while the beta subunit (this protein) combines the CO with CoA and a methyl group to form acetyl-CoA. The methyl group, which is incorporated into acetyl-CoA, is transferred to the beta subunit by a corrinoid iron-sulfur protein (the gamma-delta complex). This chain is Acetyl-CoA decarbonylase/synthase complex subunit beta 2 (cdhC2), found in Methanosarcina acetivorans (strain ATCC 35395 / DSM 2834 / JCM 12185 / C2A).